The primary structure comprises 156 residues: MAKEIILTQEGIEELKHELKHLLEVVRPQVIEELVEARNQGDLSENADYDAARNRQAEVEARIKELETMISKAKLIEDSSTTDGAIKIGSKVKFIMLNTKQTREVKIVGAVEADPFKGLISNESPIAKAILGKKVGESVEVKDINAPYSIEIKEVN.

The stretch at Ala-2–Asp-78 forms a coiled coil.

This sequence belongs to the GreA/GreB family.

In terms of biological role, necessary for efficient RNA polymerase transcription elongation past template-encoded arresting sites. The arresting sites in DNA have the property of trapping a certain fraction of elongating RNA polymerases that pass through, resulting in locked ternary complexes. Cleavage of the nascent transcript by cleavage factors such as GreA or GreB allows the resumption of elongation from the new 3'terminus. GreA releases sequences of 2 to 3 nucleotides. The polypeptide is Transcription elongation factor GreA (Mesoplasma florum (strain ATCC 33453 / NBRC 100688 / NCTC 11704 / L1) (Acholeplasma florum)).